Consider the following 377-residue polypeptide: Lipoyl synthase, mitochondrial (377 aa).

7 residues coordinate [4Fe-4S] cluster: cysteine 98, cysteine 103, cysteine 109, cysteine 128, cysteine 132, cysteine 135, and serine 343. In terms of domain architecture, Radical SAM core spans 113–332 (KKSEATATIM…RDTALDMGFL (220 aa)).

The protein belongs to the radical SAM superfamily. Lipoyl synthase family. [4Fe-4S] cluster is required as a cofactor.

Its subcellular location is the mitochondrion. It carries out the reaction [[Fe-S] cluster scaffold protein carrying a second [4Fe-4S](2+) cluster] + N(6)-octanoyl-L-lysyl-[protein] + 2 oxidized [2Fe-2S]-[ferredoxin] + 2 S-adenosyl-L-methionine + 4 H(+) = [[Fe-S] cluster scaffold protein] + N(6)-[(R)-dihydrolipoyl]-L-lysyl-[protein] + 4 Fe(3+) + 2 hydrogen sulfide + 2 5'-deoxyadenosine + 2 L-methionine + 2 reduced [2Fe-2S]-[ferredoxin]. It participates in protein modification; protein lipoylation via endogenous pathway; protein N(6)-(lipoyl)lysine from octanoyl-[acyl-carrier-protein]: step 2/2. Catalyzes the radical-mediated insertion of two sulfur atoms into the C-6 and C-8 positions of the octanoyl moiety bound to the lipoyl domains of lipoate-dependent enzymes, thereby converting the octanoylated domains into lipoylated derivatives. This Candida tropicalis (strain ATCC MYA-3404 / T1) (Yeast) protein is Lipoyl synthase, mitochondrial.